A 102-amino-acid chain; its full sequence is Large ribosomal subunit protein uL24 (102 aa).

The protein belongs to the universal ribosomal protein uL24 family. As to quaternary structure, part of the 50S ribosomal subunit.

One of two assembly initiator proteins, it binds directly to the 5'-end of the 23S rRNA, where it nucleates assembly of the 50S subunit. Its function is as follows. One of the proteins that surrounds the polypeptide exit tunnel on the outside of the subunit. The polypeptide is Large ribosomal subunit protein uL24 (Alkaliphilus oremlandii (strain OhILAs) (Clostridium oremlandii (strain OhILAs))).